Here is a 304-residue protein sequence, read N- to C-terminus: UDP-N-acetylenolpyruvoylglucosamine reductase (304 aa).

Positions 32 to 198 (RVGGPADILV…LSAELELQEG (167 aa)) constitute an FAD-binding PCMH-type domain. The active site involves R177. Catalysis depends on S227, which acts as the Proton donor. The active site involves E297.

Belongs to the MurB family. The cofactor is FAD.

The protein localises to the cytoplasm. It catalyses the reaction UDP-N-acetyl-alpha-D-muramate + NADP(+) = UDP-N-acetyl-3-O-(1-carboxyvinyl)-alpha-D-glucosamine + NADPH + H(+). It participates in cell wall biogenesis; peptidoglycan biosynthesis. Cell wall formation. The polypeptide is UDP-N-acetylenolpyruvoylglucosamine reductase (Clostridioides difficile (strain 630) (Peptoclostridium difficile)).